A 146-amino-acid polypeptide reads, in one-letter code: CysO-cysteine peptidase (146 aa).

Residues 11–134 (LVIRADLVNA…LRSYRIVDGA (124 aa)) enclose the MPN domain. The Zn(2+) site is built by His-88, His-90, and Asp-101. A JAMM motif motif is present at residues 88–101 (HSHTATEAYPSRTD).

This sequence belongs to the peptidase M67A family. The cofactor is Zn(2+).

The catalysed reaction is [CysO sulfur-carrier protein]-Gly-NH-CH2-C(O)-S-L-Cys + H2O = [CysO sulfur-carrier protein]-C-terminal Gly-Gly + L-cysteine + H(+). Its pathway is amino-acid biosynthesis; L-cysteine biosynthesis. Its function is as follows. Protease that hydrolyzes the covalent CysO-cysteine adduct synthesized by CysM to release L-cysteine and regenerate CysO. This Mycobacterium bovis (strain ATCC BAA-935 / AF2122/97) protein is CysO-cysteine peptidase (mec).